The sequence spans 520 residues: Keratin, type II cytoskeletal 72 (520 aa).

Residues 1–133 (MSRQLTLYPG…DPEIQKVRAQ (133 aa)) are head. Positions 134-169 (EREQIKALNNKFASFIDKVRFLEQQNQVLETKWELL) are coil 1A. In terms of domain architecture, IF rod spans 134-447 (EREQIKALNN…KLLESEESRM (314 aa)). The interval 170–188 (QQLDQNNSRRSLEPVHESY) is linker 1. Residues 189–280 (ISNLQKQLEI…VLFEGEIAQM (92 aa)) are coil 1B. Positions 281–304 (QSHISDTSVILSMDNNRQLDLDSI) are linker 12. Positions 305-443 (LAEVRAQYEE…ATYRKLLESE (139 aa)) are coil 2. The tract at residues 444–520 (ESRMAGEYPS…SSCVSKKASR (77 aa)) is tail. The tract at residues 495–520 (GSCGSELKDPPAKTSASSCVSKKASR) is disordered.

It belongs to the intermediate filament family. In terms of assembly, heterotetramer of two type I and two type II keratins.

Functionally, has a role in hair formation. Specific component of keratin intermediate filaments in the inner root sheath (IRS) of the hair follicle. In Rattus norvegicus (Rat), this protein is Keratin, type II cytoskeletal 72 (Krt72).